A 346-amino-acid polypeptide reads, in one-letter code: Lysyl aminopeptidase (346 aa).

Positions 63 and 177 each coordinate Zn(2+). Glutamate 207 functions as the Proton acceptor in the catalytic mechanism. Residues glutamate 208, aspartate 230, and histidine 314 each contribute to the Zn(2+) site.

As to quaternary structure, homotetramer. It depends on Zn(2+) as a cofactor.

The catalysed reaction is Preferentially, release of N-terminal lysine.. Its function is as follows. Hydrolyzes di-, tri- and tetrapeptides with a lysine as the N-terminal amino acid and with Gly, Lys, Ala, Phe or Glu in the second position. The protein is Lysyl aminopeptidase of Pyrococcus furiosus (strain ATCC 43587 / DSM 3638 / JCM 8422 / Vc1).